Consider the following 275-residue polypeptide: Large ribosomal subunit protein uL2 (275 aa).

The interval 214–275 (RWRGNRPTVR…NKFILSHRNK (62 aa)) is disordered. A compositionally biased stretch (basic residues) spans 255–275 (KGKKTRSNKRTNKFILSHRNK).

The protein belongs to the universal ribosomal protein uL2 family. As to quaternary structure, part of the 50S ribosomal subunit. Forms a bridge to the 30S subunit in the 70S ribosome.

In terms of biological role, one of the primary rRNA binding proteins. Required for association of the 30S and 50S subunits to form the 70S ribosome, for tRNA binding and peptide bond formation. It has been suggested to have peptidyltransferase activity; this is somewhat controversial. Makes several contacts with the 16S rRNA in the 70S ribosome. This chain is Large ribosomal subunit protein uL2, found in Blochmanniella pennsylvanica (strain BPEN).